The chain runs to 166 residues: MTSIETTVVKVGIADLKIIQFPQLIRTSGLGSCVGTVIYDDKKEIAGLSHVLLPYSQQGKQANTNPYKYADTAISYLYNELLKRGANQSSLKAKLAGGAQMFQLRTGSDLMRIGPRNVESVELALAEFGIPIVSKDVGGNLGRTIEFDPRSKLLAVRKINQEVIMI.

Belongs to the CheD family.

The enzyme catalyses L-glutaminyl-[protein] + H2O = L-glutamyl-[protein] + NH4(+). Its function is as follows. Probably deamidates glutamine residues to glutamate on methyl-accepting chemotaxis receptors (MCPs), playing an important role in chemotaxis. This is Probable chemoreceptor glutamine deamidase CheD from Oceanobacillus iheyensis (strain DSM 14371 / CIP 107618 / JCM 11309 / KCTC 3954 / HTE831).